The chain runs to 124 residues: UPF0357 protein C1687.07 (124 aa).

The first 24 residues, 1 to 24 (MASFHIIVSYVTVVLAIIIAITFA), serve as a signal peptide directing secretion.

Belongs to the UPF0357 family.

This Schizosaccharomyces pombe (strain 972 / ATCC 24843) (Fission yeast) protein is UPF0357 protein C1687.07.